Here is a 329-residue protein sequence, read N- to C-terminus: Segregation and condensation protein B (329 aa).

3 disordered regions span residues 1–39, 252–274, and 286–329; these read MTTGSNGPQDETPEPGTPGGPGPFSEEEIAAVTGPGPAD, IVEKEDKPAPPAAGTVEALSDPA, and SEAA…PKPE.

It belongs to the ScpB family. In terms of assembly, homodimer. Homodimerization may be required to stabilize the binding of ScpA to the Smc head domains. Component of the Structural Maintenance of Chromosome (SMC) condensin-like complex composed of ScpA, ScpB and the Smc homodimer. ScpA and ScpB bind to the head domain of Smc, the presence of the three proteins is required for the association of the complex with DNA.

It localises to the cytoplasm. Functionally, a conditionally essential component of the chromosome segregation machinery. Required for chromosome condensation and partitioning. Important for positioning and anchoring of ParB-parS complexes (ori of replication) in the subpolar region, and of the ter replication site, as well as for segration of the ParB-parS complex and thus chromosome segregation. Probably acts via the formation of a condensin-like complex containing Smc, ScpA and ScpB that pulls DNA away from mid-cell into both cell halves. The sequence is that of Segregation and condensation protein B from Myxococcus xanthus (strain DK1622).